A 475-amino-acid polypeptide reads, in one-letter code: Ribulose bisphosphate carboxylase large chain (475 aa).

Residues 1–2 constitute a propeptide that is removed on maturation; the sequence is MS. Position 3 is an N-acetylproline (Pro3). An N6,N6,N6-trimethyllysine modification is found at Lys14. Substrate contacts are provided by Asn123 and Thr173. The active-site Proton acceptor is the Lys175. Lys177 provides a ligand contact to substrate. Residues Lys201, Asp203, and Glu204 each coordinate Mg(2+). N6-carboxylysine is present on Lys201. His294 functions as the Proton acceptor in the catalytic mechanism. Arg295, His327, and Ser379 together coordinate substrate.

This sequence belongs to the RuBisCO large chain family. Type I subfamily. In terms of assembly, heterohexadecamer of 8 large chains and 8 small chains. Requires Mg(2+) as cofactor.

It localises to the plastid. The protein localises to the chloroplast. It carries out the reaction 2 (2R)-3-phosphoglycerate + 2 H(+) = D-ribulose 1,5-bisphosphate + CO2 + H2O. The enzyme catalyses D-ribulose 1,5-bisphosphate + O2 = 2-phosphoglycolate + (2R)-3-phosphoglycerate + 2 H(+). Its function is as follows. RuBisCO catalyzes two reactions: the carboxylation of D-ribulose 1,5-bisphosphate, the primary event in carbon dioxide fixation, as well as the oxidative fragmentation of the pentose substrate in the photorespiration process. Both reactions occur simultaneously and in competition at the same active site. The protein is Ribulose bisphosphate carboxylase large chain of Bazzania trilobata (Greater whipwort).